The primary structure comprises 197 residues: Imidazoleglycerol-phosphate dehydratase (197 aa).

This sequence belongs to the imidazoleglycerol-phosphate dehydratase family.

Its subcellular location is the cytoplasm. The catalysed reaction is D-erythro-1-(imidazol-4-yl)glycerol 3-phosphate = 3-(imidazol-4-yl)-2-oxopropyl phosphate + H2O. It participates in amino-acid biosynthesis; L-histidine biosynthesis; L-histidine from 5-phospho-alpha-D-ribose 1-diphosphate: step 6/9. This is Imidazoleglycerol-phosphate dehydratase from Teredinibacter turnerae (strain ATCC 39867 / T7901).